The sequence spans 160 residues: Cytochrome b6-f complex subunit 4 (160 aa).

The next 3 helical transmembrane spans lie at 36 to 56 (LLYV…GLSV), 95 to 115 (LLGV…PFIE), and 131 to 151 (LTFI…CVPI).

Belongs to the cytochrome b family. PetD subfamily. As to quaternary structure, the 4 large subunits of the cytochrome b6-f complex are cytochrome b6, subunit IV (17 kDa polypeptide, petD), cytochrome f and the Rieske protein, while the 4 small subunits are petG, petL, petM and petN. The complex functions as a dimer.

It localises to the plastid. It is found in the chloroplast thylakoid membrane. Its function is as follows. Component of the cytochrome b6-f complex, which mediates electron transfer between photosystem II (PSII) and photosystem I (PSI), cyclic electron flow around PSI, and state transitions. This Phaeodactylum tricornutum (strain CCAP 1055/1) protein is Cytochrome b6-f complex subunit 4.